A 318-amino-acid chain; its full sequence is Aspartate carbamoyltransferase catalytic subunit (318 aa).

Carbamoyl phosphate is bound by residues R59 and T60. Residue K87 coordinates L-aspartate. Residues R109, H137, and Q140 each coordinate carbamoyl phosphate. The L-aspartate site is built by R170 and R224. Residues G265 and P266 each contribute to the carbamoyl phosphate site.

Belongs to the aspartate/ornithine carbamoyltransferase superfamily. ATCase family. Heterododecamer (2C3:3R2) of six catalytic PyrB chains organized as two trimers (C3), and six regulatory PyrI chains organized as three dimers (R2).

The enzyme catalyses carbamoyl phosphate + L-aspartate = N-carbamoyl-L-aspartate + phosphate + H(+). It participates in pyrimidine metabolism; UMP biosynthesis via de novo pathway; (S)-dihydroorotate from bicarbonate: step 2/3. Functionally, catalyzes the condensation of carbamoyl phosphate and aspartate to form carbamoyl aspartate and inorganic phosphate, the committed step in the de novo pyrimidine nucleotide biosynthesis pathway. The chain is Aspartate carbamoyltransferase catalytic subunit from Rhizobium johnstonii (strain DSM 114642 / LMG 32736 / 3841) (Rhizobium leguminosarum bv. viciae).